Here is a 345-residue protein sequence, read N- to C-terminus: tRNA-specific 2-thiouridylase MnmA (345 aa).

Residues 6–13 (LMSGGVDS) and Leu-32 contribute to the ATP site. The Nucleophile role is filled by Cys-92. A disulfide bridge connects residues Cys-92 and Cys-191. Residue Gly-116 coordinates ATP. The interaction with tRNA stretch occupies residues 138 to 140 (KDQ). Cys-191 functions as the Cysteine persulfide intermediate in the catalytic mechanism. An interaction with tRNA region spans residues 293 to 294 (RY).

Belongs to the MnmA/TRMU family.

The protein resides in the cytoplasm. The enzyme catalyses S-sulfanyl-L-cysteinyl-[protein] + uridine(34) in tRNA + AH2 + ATP = 2-thiouridine(34) in tRNA + L-cysteinyl-[protein] + A + AMP + diphosphate + H(+). Catalyzes the 2-thiolation of uridine at the wobble position (U34) of tRNA, leading to the formation of s(2)U34. In Helicobacter hepaticus (strain ATCC 51449 / 3B1), this protein is tRNA-specific 2-thiouridylase MnmA.